Consider the following 551-residue polypeptide: Tetrachloroethene reductive dehalogenase (551 aa).

Residues 1 to 39 constitute a signal peptide (tat-type signal); the sequence is MGEINRRNFLKASMLGAAAAAVASASVVKGVVSPLVADA. The 4Fe-4S ferredoxin-type 1 domain maps to 411–440; it reads PRKFGVREFCRLCKKCADACPAQAISHEKD. [4Fe-4S] cluster is bound by residues Cys-420, Cys-423, Cys-426, Cys-430, Cys-467, Cys-478, Cys-481, and Cys-485. In terms of domain architecture, 4Fe-4S ferredoxin-type 2 spans 478–496; the sequence is CSNCVAVCSWNKVETWNHD.

Belongs to the PceA family. It depends on [4Fe-4S] cluster as a cofactor. The cofactor is corrinoid. Post-translationally, predicted to be exported by the Tat system. The position of the signal peptide cleavage has been experimentally proven.

It is found in the cell membrane. It catalyses the reaction trichloroethene + chloride + A + H(+) = tetrachloroethene + AH2. The enzyme catalyses trichloroethene + AH2 = (Z)-1,2-dichloroethene + chloride + A + H(+). Functionally, catalyzes the reductive dechlorination of tetrachloroethene (PCE) to trichloroethene (TCE) and of trichloroethene to cis-1,2-dichloroethene (DCE). Reduced methyl viologen can act as the artificial electron donor. The polypeptide is Tetrachloroethene reductive dehalogenase (Desulfitobacterium hafniense (Desulfitobacterium frappieri)).